The sequence spans 68 residues: U2-agatoxin-Ao1u (68 aa).

An N-terminal signal peptide occupies residues M1–A20. Residues V21 to R34 constitute a propeptide that is removed on maturation. 3 cysteine pairs are disulfide-bonded: C36-C52, C43-C57, and C51-C67.

Belongs to the neurotoxin 01 (U2-agtx) family. Expressed by the venom gland.

Its subcellular location is the secreted. Its function is as follows. Insect active toxin causing rapid but reversible paralysis in crickets. No activity shown in mammals. Does not show effect on mammalian voltage-gated calcium channels. This is U2-agatoxin-Ao1u from Agelena orientalis (Funnel-web spider).